The primary structure comprises 285 residues: RNA 5'-monophosphate methyltransferase (285 aa).

S-adenosyl-L-methionine contacts are provided by residues arginine 46, asparagine 77, aspartate 111, 136 to 137 (DI), and methionine 165. Residues 53-275 (ELLRQLFPPE…KHTHETQAIP (223 aa)) enclose the Bin3-type SAM domain.

This sequence belongs to the methyltransferase superfamily. As to quaternary structure, interacts with DICER1; the interaction may be mediated by RNA.

It localises to the cytoplasm. The catalysed reaction is a 5'-end 5'-phospho-ribonucleoside-RNA + S-adenosyl-L-methionine = a 5'-end (5'-methylphospho)-ribonucleoside-RNA + S-adenosyl-L-homocysteine. It carries out the reaction a 5'-end 5'-phospho-ribonucleoside-RNA + 2 S-adenosyl-L-methionine = a 5'-end (5'-bismethylphospho)-ribonucleoside-RNA + 2 S-adenosyl-L-homocysteine. In terms of biological role, O-methyltransferase that specifically monomethylates 5'-monophosphate of cytoplasmic histidyl tRNA (tRNA(His)), acting as a capping enzyme by protecting tRNA(His) from cleavage by DICER1. Also able, with less efficiently, to methylate the 5' monophosphate of a subset of pre-miRNAs, acting as a negative regulator of miRNA processing. The 5' monophosphate of pre-miRNAs is recognized by DICER1 and is required for pre-miRNAs processing: methylation at this position reduces the processing of pre-miRNAs by DICER1. Was also reported to mediate dimethylation of pre-miR-145; however dimethylation cannot be reproduced by another group which observes a monomethylation of pre-miR-145. The protein is RNA 5'-monophosphate methyltransferase of Mus musculus (Mouse).